Here is a 62-residue protein sequence, read N- to C-terminus: Large ribosomal subunit protein uL30 (62 aa).

This sequence belongs to the universal ribosomal protein uL30 family. In terms of assembly, part of the 50S ribosomal subunit.

This is Large ribosomal subunit protein uL30 from Ruegeria pomeroyi (strain ATCC 700808 / DSM 15171 / DSS-3) (Silicibacter pomeroyi).